We begin with the raw amino-acid sequence, 505 residues long: Aspartyl/glutamyl-tRNA(Asn/Gln) amidotransferase subunit B (505 aa).

Belongs to the GatB/GatE family. GatB subfamily. As to quaternary structure, heterotrimer of A, B and C subunits.

It carries out the reaction L-glutamyl-tRNA(Gln) + L-glutamine + ATP + H2O = L-glutaminyl-tRNA(Gln) + L-glutamate + ADP + phosphate + H(+). The enzyme catalyses L-aspartyl-tRNA(Asn) + L-glutamine + ATP + H2O = L-asparaginyl-tRNA(Asn) + L-glutamate + ADP + phosphate + 2 H(+). Functionally, allows the formation of correctly charged Asn-tRNA(Asn) or Gln-tRNA(Gln) through the transamidation of misacylated Asp-tRNA(Asn) or Glu-tRNA(Gln) in organisms which lack either or both of asparaginyl-tRNA or glutaminyl-tRNA synthetases. The reaction takes place in the presence of glutamine and ATP through an activated phospho-Asp-tRNA(Asn) or phospho-Glu-tRNA(Gln). This Corynebacterium jeikeium (strain K411) protein is Aspartyl/glutamyl-tRNA(Asn/Gln) amidotransferase subunit B.